Here is a 285-residue protein sequence, read N- to C-terminus: Glutamate racemase (285 aa).

Substrate contacts are provided by residues 28–29 (DS) and 60–61 (YG). Cys92 acts as the Proton donor/acceptor in catalysis. A substrate-binding site is contributed by 93–94 (NT). Cys204 acts as the Proton donor/acceptor in catalysis. Residue 205-206 (TH) coordinates substrate.

This sequence belongs to the aspartate/glutamate racemases family.

It carries out the reaction L-glutamate = D-glutamate. The protein operates within cell wall biogenesis; peptidoglycan biosynthesis. Functionally, provides the (R)-glutamate required for cell wall biosynthesis. This chain is Glutamate racemase, found in Escherichia fergusonii (strain ATCC 35469 / DSM 13698 / CCUG 18766 / IAM 14443 / JCM 21226 / LMG 7866 / NBRC 102419 / NCTC 12128 / CDC 0568-73).